The primary structure comprises 352 residues: Pejvakin (352 aa).

The protein belongs to the gasdermin family. As to quaternary structure, interacts with MAP1LC3B; interaction is direct. Interacts with IQGAP1. Interacts with ROCK2. Interacts with TRIOBP. In ear, it is detected in the organ of Corti and the spiral ganglion within the cochlea in the sensory areas of the vestibule (cristae ampullares of the semicircular ducts, and maculae of the saccule and utricle) and in the first 3 relays (cochlear nuclei, superior olivary complex and inferior colliculus) of the afferent auditory pathway. Detected in hair cells of the cochlea and vestibule but not in neurons. In the afferent auditory pathway, it is present in the cell bodies of neurons but not in fiber bundles such as the trapezoid body in the brainstem. Also detected in spiral ganglion cells, which form the auditory nerve and project to the cochlear nuclei in the brainstem. Also present in the cochlear nuclei, the superior olive and the inferior colliculus (at protein level). Expressed in all the adult organs tested: brain, eye, inner ear, heart, lung, kidney, liver, intestine, testis and weakly in skeletal muscle.

It localises to the peroxisome membrane. Its subcellular location is the cell projection. The protein resides in the cilium. Peroxisome-associated protein required to protect auditory hair cells against noise-induced damage. Acts by regulating noise-induced peroxisome proliferation in auditory hair cells and neurons, and promoting autophagic degradation of damaged peroxisomes (pexophagy). Noise overexposure increases reactive oxygen species (ROS) levels, causing oxidative damage to auditory hair cells and resulting in hearing loss. PJVK acts as a ROS sensor that recruits the autophagy machinery to trigger pexophagy of peroxisomes damaged by oxidative stress. In addition to pexophagy, also required to promote peroxisome proliferation in response to sound overstimulation. The chain is Pejvakin from Mus musculus (Mouse).